The following is a 286-amino-acid chain: Master replication protein (286 aa).

Positions 2–96 (ARQVICWCFT…VEGPWEFGEF (95 aa)) constitute a CRESS-DNA virus Rep endonuclease domain. An RCR-1 motif is present at residues 9–12 (CFTL). The a divalent metal cation site is built by Glu33 and His41. The short motif at 41-43 (HYQ) is the RCR-2 element. The short motif at 50–70 (KRTSLVQMKKLLPGAHLEKRR) is the Nuclear localization signal element. Residue Tyr79 is the For DNA cleavage activity of the active site. An RCR-3 motif is present at residues 79–82 (YAMK). Residue Asp84 coordinates a divalent metal cation. Positions 96 to 102 (FKEVLED) match the Nuclear localization signal motif. An ATP-binding site is contributed by 180 to 188 (GPQGGEGKT).

The protein belongs to the nanoviridea/circoviridae replication-associated protein family. Homooligomer (Potential). Rep binds to repeated DNA motifs (iterons). Mg(2+) is required as a cofactor. It depends on Mn(2+) as a cofactor.

The protein localises to the host nucleus. The catalysed reaction is ATP + H2O = ADP + phosphate + H(+). Its function is as follows. Essential for the replication of all genomic viral ssDNA (trans-replication). The closed circular ssDNA genome is first converted to a superhelical dsDNA. Rep binds a specific hairpin at the genome origin of replication. Introduces an endonucleolytic nick within the conserved sequence 5'-A[GT]TATTAC-3' in the intergenic region of the genome, thereby initiating the rolling circle replication (RCR). Following cleavage, binds covalently to the 5'-phosphate of DNA as a tyrosyl ester. The cleavage gives rise to a free 3'-OH that serves as a primer for the cellular DNA polymerase. The polymerase synthesizes the (+) strand DNA by rolling circle mechanism. After one round of replication, a Rep-catalyzed nucleotidyl transfer reaction releases a circular single-stranded virus genome, thereby terminating the replication. Displays origin-specific DNA cleavage, nucleotidyl transferase, ATPase and helicase activities. This Subterranean clover stunt virus (strain F) (SCSV) protein is Master replication protein (DNA-R).